The following is a 176-amino-acid chain: ATP-dependent protease subunit HslV (176 aa).

Residue Thr2 is part of the active site. Na(+) is bound by residues Gly157, Cys160, and Thr163.

It belongs to the peptidase T1B family. HslV subfamily. In terms of assembly, a double ring-shaped homohexamer of HslV is capped on each side by a ring-shaped HslU homohexamer. The assembly of the HslU/HslV complex is dependent on binding of ATP.

The protein resides in the cytoplasm. It carries out the reaction ATP-dependent cleavage of peptide bonds with broad specificity.. Allosterically activated by HslU binding. Protease subunit of a proteasome-like degradation complex believed to be a general protein degrading machinery. This Marinobacter nauticus (strain ATCC 700491 / DSM 11845 / VT8) (Marinobacter aquaeolei) protein is ATP-dependent protease subunit HslV.